A 283-amino-acid chain; its full sequence is Bifunctional protein FolD (283 aa).

NADP(+) contacts are provided by residues 165–167 (GRS) and serine 190.

The protein belongs to the tetrahydrofolate dehydrogenase/cyclohydrolase family. In terms of assembly, homodimer.

The catalysed reaction is (6R)-5,10-methylene-5,6,7,8-tetrahydrofolate + NADP(+) = (6R)-5,10-methenyltetrahydrofolate + NADPH. The enzyme catalyses (6R)-5,10-methenyltetrahydrofolate + H2O = (6R)-10-formyltetrahydrofolate + H(+). It participates in one-carbon metabolism; tetrahydrofolate interconversion. Catalyzes the oxidation of 5,10-methylenetetrahydrofolate to 5,10-methenyltetrahydrofolate and then the hydrolysis of 5,10-methenyltetrahydrofolate to 10-formyltetrahydrofolate. This chain is Bifunctional protein FolD, found in Methylibium petroleiphilum (strain ATCC BAA-1232 / LMG 22953 / PM1).